The primary structure comprises 287 residues: 2-dehydro-3-deoxyphosphooctonate aldolase (287 aa).

The protein belongs to the KdsA family.

The protein resides in the cytoplasm. It carries out the reaction D-arabinose 5-phosphate + phosphoenolpyruvate + H2O = 3-deoxy-alpha-D-manno-2-octulosonate-8-phosphate + phosphate. It participates in carbohydrate biosynthesis; 3-deoxy-D-manno-octulosonate biosynthesis; 3-deoxy-D-manno-octulosonate from D-ribulose 5-phosphate: step 2/3. It functions in the pathway bacterial outer membrane biogenesis; lipopolysaccharide biosynthesis. The sequence is that of 2-dehydro-3-deoxyphosphooctonate aldolase from Caulobacter vibrioides (strain ATCC 19089 / CIP 103742 / CB 15) (Caulobacter crescentus).